We begin with the raw amino-acid sequence, 136 residues long: Large ribosomal subunit protein uL3 (136 aa).

Gln83 is modified (N5-methylglutamine).

Belongs to the universal ribosomal protein uL3 family. Part of the 50S ribosomal subunit. Forms a cluster with proteins L14 and L19. In terms of processing, methylated by PrmB.

Its function is as follows. One of the primary rRNA binding proteins, it binds directly near the 3'-end of the 23S rRNA, where it nucleates assembly of the 50S subunit. The chain is Large ribosomal subunit protein uL3 (rplC) from Carsonella ruddii.